The sequence spans 572 residues: Secreted triacylglycerol lipase LIP6 (572 aa).

An N-terminal signal peptide occupies residues 1 to 23 (MYSTSLLRWLVVALVSAVPLVTA). Cys-117 and Cys-291 are oxidised to a cystine. The active-site Nucleophile is the Ser-202. Residue Asp-351 is part of the active site. Asn-360 carries N-linked (GlcNAc...) asparagine glycosylation. Residue His-385 is part of the active site. Residues 468–572 (KGGVWNDVLK…SSRRHVARFM (105 aa)) are disordered. The segment covering 491–511 (PESKKATKKYKSESKAEKKQP) has biased composition (basic and acidic residues). Residues 512–525 (DSIPSSSSKSSSDN) show a composition bias toward low complexity. A glycan (N-linked (GlcNAc...) asparagine) is linked at Asn-525. Basic residues predominate over residues 528-540 (AHAKYHAHGHGHG). The span at 541–562 (HASSNSNNGHSHSAKESSTSKG) shows a compositional bias: low complexity. The segment covering 563-572 (SSRRHVARFM) has biased composition (basic residues).

Belongs to the AB hydrolase superfamily. Lipase family. Class Lip subfamily.

It is found in the secreted. The protein resides in the cell wall. It carries out the reaction a triacylglycerol + H2O = a diacylglycerol + a fatty acid + H(+). The catalysed reaction is a monoacylglycerol + H2O = glycerol + a fatty acid + H(+). The enzyme catalyses a diacylglycerol + H2O = a monoacylglycerol + a fatty acid + H(+). In terms of biological role, secreted lipase involved in Dandruff and seborrheic dermatitis (D/SD) probably via lipase-mediated breakdown of sebaceous lipids and release of irritating free fatty acids. Shows only minimal activity against triolein. Mostly converts monoolein to di- and triolein, while free fatty acids are only produced in low amounts. The sequence is that of Secreted triacylglycerol lipase LIP6 from Malassezia globosa (strain ATCC MYA-4612 / CBS 7966) (Dandruff-associated fungus).